The sequence spans 106 residues: Protein translation factor SUI1 homolog (106 aa).

The protein belongs to the SUI1 family.

In terms of biological role, additional factor that functions in concert with eIF-2 and the initiator tRNA in directing the ribosome to the proper start site of translation. This Acanthamoeba polyphaga mimivirus (APMV) protein is Protein translation factor SUI1 homolog.